Here is a 538-residue protein sequence, read N- to C-terminus: Ubiquitin domain-containing protein DSK2a (538 aa).

The region spanning 18-93 is the Ubiquitin-like domain; it reads VAVNVRCSNG…VHMVRGFVPS (76 aa). Residues 95-120 form a disordered region; it reads PSAPAANAGNQTTAPQAVGSNDSSNL. The span at 102–119 shows a compositional bias: polar residues; the sequence is AGNQTTAPQAVGSNDSSN. STI1 domains lie at 138–179 and 192–231; these read GNAM…QNLM and NPQM…MREM. Positions 289–316 are disordered; sequence QGVTTQGSDTSNNISAPNAETGTPNANP. 2 STI1 domains span residues 357 to 394 and 398 to 433; these read SPLG…MNQL and NPQL…MQQM. Residues 491 to 535 form the UBA domain; it reads PPEERFATQLQQLQEMGFYDRAENIRALLATNGNVNAAVERLLGS.

Interacts with 'Lys-48'-linked polyubiquitin chains via its UBA domain. Interacts with RPN10 and RPN13. Interacts with PEX2 and PEX12. In terms of tissue distribution, ubiquitous with a strong expression level in inflorescence.

The protein localises to the nucleus. It localises to the cytoplasm. Binds and presumably selects ubiquitin-conjugates for destruction. Prefers multiubiquitin chains rather than single ubiquitins, with a binding affinity for 'Lys-48'-linked ubiquitin chains. Acts as a ubiquitin receptor that associates with the 26S proteasomal docking subunit RPN10 for the indirect recognition of ubiquitinated substrates of ubiquitin/26S proteasome-mediated proteolysis (UPP). This Arabidopsis thaliana (Mouse-ear cress) protein is Ubiquitin domain-containing protein DSK2a (DSK2A).